A 588-amino-acid polypeptide reads, in one-letter code: Adenine deaminase (588 aa).

Belongs to the metallo-dependent hydrolases superfamily. Adenine deaminase family. As to quaternary structure, homodimer. The cofactor is Mn(2+).

It catalyses the reaction adenine + H2O + H(+) = hypoxanthine + NH4(+). The polypeptide is Adenine deaminase (Escherichia coli O6:H1 (strain CFT073 / ATCC 700928 / UPEC)).